The chain runs to 616 residues: Dihydroxy-acid dehydratase (616 aa).

Aspartate 81 provides a ligand contact to Mg(2+). Cysteine 122 lines the [2Fe-2S] cluster pocket. Residues aspartate 123 and lysine 124 each contribute to the Mg(2+) site. Residue lysine 124 is modified to N6-carboxylysine. Residue cysteine 195 participates in [2Fe-2S] cluster binding. A Mg(2+)-binding site is contributed by glutamate 491. Serine 517 (proton acceptor) is an active-site residue.

Belongs to the IlvD/Edd family. As to quaternary structure, homodimer. [2Fe-2S] cluster is required as a cofactor. Mg(2+) serves as cofactor.

It catalyses the reaction (2R)-2,3-dihydroxy-3-methylbutanoate = 3-methyl-2-oxobutanoate + H2O. The catalysed reaction is (2R,3R)-2,3-dihydroxy-3-methylpentanoate = (S)-3-methyl-2-oxopentanoate + H2O. It functions in the pathway amino-acid biosynthesis; L-isoleucine biosynthesis; L-isoleucine from 2-oxobutanoate: step 3/4. It participates in amino-acid biosynthesis; L-valine biosynthesis; L-valine from pyruvate: step 3/4. In terms of biological role, functions in the biosynthesis of branched-chain amino acids. Catalyzes the dehydration of (2R,3R)-2,3-dihydroxy-3-methylpentanoate (2,3-dihydroxy-3-methylvalerate) into 2-oxo-3-methylpentanoate (2-oxo-3-methylvalerate) and of (2R)-2,3-dihydroxy-3-methylbutanoate (2,3-dihydroxyisovalerate) into 2-oxo-3-methylbutanoate (2-oxoisovalerate), the penultimate precursor to L-isoleucine and L-valine, respectively. This is Dihydroxy-acid dehydratase from Yersinia pseudotuberculosis serotype I (strain IP32953).